Here is a 454-residue protein sequence, read N- to C-terminus: UPF0210 protein EUBREC_1565 (454 aa).

It belongs to the UPF0210 family. In terms of assembly, homodimer.

This chain is UPF0210 protein EUBREC_1565, found in Agathobacter rectalis (strain ATCC 33656 / DSM 3377 / JCM 17463 / KCTC 5835 / VPI 0990) (Eubacterium rectale).